Reading from the N-terminus, the 75-residue chain is MASEVLAKPQMRGLLARRLRIHMVGAFLISLGVAALYKFGVAEPRKKAYADFYKNYSPEKDFEEMKKAGVFRSIK.

The Mitochondrial matrix portion of the chain corresponds to 1 to 13 (MASEVLAKPQMRG). Residues 14–54 (LLARRLRIHMVGAFLISLGVAALYKFGVAEPRKKAYADFYK) traverse the membrane as a helical segment. Topologically, residues 55–75 (NYSPEKDFEEMKKAGVFRSIK) are mitochondrial intermembrane.

Belongs to the cytochrome c oxidase subunit 6c family. As to quaternary structure, component of the cytochrome c oxidase (complex IV, CIV), a multisubunit enzyme composed of 14 subunits. The complex is composed of a catalytic core of 3 subunits MT-CO1, MT-CO2 and MT-CO3, encoded in the mitochondrial DNA, and 11 supernumerary subunits COX4I, COX5A, COX5B, COX6A, COX6B, COX6C, COX7A, COX7B, COX7C, COX8 and NDUFA4, which are encoded in the nuclear genome. The complex exists as a monomer or a dimer and forms supercomplexes (SCs) in the inner mitochondrial membrane with NADH-ubiquinone oxidoreductase (complex I, CI) and ubiquinol-cytochrome c oxidoreductase (cytochrome b-c1 complex, complex III, CIII), resulting in different assemblies (supercomplex SCI(1)III(2)IV(1) and megacomplex MCI(2)III(2)IV(2)).

The protein resides in the mitochondrion inner membrane. Its pathway is energy metabolism; oxidative phosphorylation. In terms of biological role, component of the cytochrome c oxidase, the last enzyme in the mitochondrial electron transport chain which drives oxidative phosphorylation. The respiratory chain contains 3 multisubunit complexes succinate dehydrogenase (complex II, CII), ubiquinol-cytochrome c oxidoreductase (cytochrome b-c1 complex, complex III, CIII) and cytochrome c oxidase (complex IV, CIV), that cooperate to transfer electrons derived from NADH and succinate to molecular oxygen, creating an electrochemical gradient over the inner membrane that drives transmembrane transport and the ATP synthase. Cytochrome c oxidase is the component of the respiratory chain that catalyzes the reduction of oxygen to water. Electrons originating from reduced cytochrome c in the intermembrane space (IMS) are transferred via the dinuclear copper A center (CU(A)) of subunit 2 and heme A of subunit 1 to the active site in subunit 1, a binuclear center (BNC) formed by heme A3 and copper B (CU(B)). The BNC reduces molecular oxygen to 2 water molecules using 4 electrons from cytochrome c in the IMS and 4 protons from the mitochondrial matrix. The sequence is that of Cytochrome c oxidase subunit 6C (COX6C) from Saimiri sciureus (Common squirrel monkey).